We begin with the raw amino-acid sequence, 407 residues long: Putative aspartate aminotransferase, cytoplasmic 2 (407 aa).

The residue at position 249 (Lys-249) is an N6-(pyridoxal phosphate)lysine.

The protein belongs to the class-I pyridoxal-phosphate-dependent aminotransferase family. In terms of assembly, homodimer. Pyridoxal 5'-phosphate is required as a cofactor.

It is found in the cytoplasm. The enzyme catalyses L-aspartate + 2-oxoglutarate = oxaloacetate + L-glutamate. This is Putative aspartate aminotransferase, cytoplasmic 2 (GOT1L1) from Bos taurus (Bovine).